A 475-amino-acid chain; its full sequence is Aspartyl/glutamyl-tRNA(Asn/Gln) amidotransferase subunit B (475 aa).

It belongs to the GatB/GatE family. GatB subfamily. In terms of assembly, heterotrimer of A, B and C subunits.

The catalysed reaction is L-glutamyl-tRNA(Gln) + L-glutamine + ATP + H2O = L-glutaminyl-tRNA(Gln) + L-glutamate + ADP + phosphate + H(+). The enzyme catalyses L-aspartyl-tRNA(Asn) + L-glutamine + ATP + H2O = L-asparaginyl-tRNA(Asn) + L-glutamate + ADP + phosphate + 2 H(+). Its function is as follows. Allows the formation of correctly charged Asn-tRNA(Asn) or Gln-tRNA(Gln) through the transamidation of misacylated Asp-tRNA(Asn) or Glu-tRNA(Gln) in organisms which lack either or both of asparaginyl-tRNA or glutaminyl-tRNA synthetases. The reaction takes place in the presence of glutamine and ATP through an activated phospho-Asp-tRNA(Asn) or phospho-Glu-tRNA(Gln). This Mycoplasma mobile (strain ATCC 43663 / 163K / NCTC 11711) (Mesomycoplasma mobile) protein is Aspartyl/glutamyl-tRNA(Asn/Gln) amidotransferase subunit B.